A 355-amino-acid polypeptide reads, in one-letter code: Peptide chain release factor 1 (355 aa).

Residue glutamine 233 is modified to N5-methylglutamine.

The protein belongs to the prokaryotic/mitochondrial release factor family. Post-translationally, methylated by PrmC. Methylation increases the termination efficiency of RF1.

The protein localises to the cytoplasm. Peptide chain release factor 1 directs the termination of translation in response to the peptide chain termination codons UAG and UAA. In Caldicellulosiruptor bescii (strain ATCC BAA-1888 / DSM 6725 / KCTC 15123 / Z-1320) (Anaerocellum thermophilum), this protein is Peptide chain release factor 1.